Reading from the N-terminus, the 252-residue chain is uncharacterized protein (252 aa).

Residues 80 to 100 traverse the membrane as a helical segment; sequence LSVLVIGSTMFTHAGVLPVLA.

It localises to the host membrane. Its subcellular location is the virion. This is an uncharacterized protein from Acanthamoeba polyphaga mimivirus (APMV).